The chain runs to 308 residues: Limonin dehydrogenase (308 aa).

The protein belongs to the aldehyde dehydrogenase family.

Its subcellular location is the periplasm. With respect to regulation, completely inhibited by HgCl(2), CoCl(2) and CaCl(2). Functionally, catalyzes the NAD(+)-dependent conversion of limonin. This Pseudomonas putida (Arthrobacter siderocapsulatus) protein is Limonin dehydrogenase.